A 445-amino-acid polypeptide reads, in one-letter code: Alkylglycerol monooxygenase (445 aa).

2 helical membrane passes run 43–63 (ATPFFISLMLLELVVSWILKG) and 111–131 (WDSPWTWYSAFLGVDFGYYWF). The Fatty acid hydroxylase domain occupies 120-249 (AFLGVDFGYY…LIIWDKIFGT (130 aa)). The Histidine box-1 signature appears at 132–136 (HRMAH). A Histidine box-2 motif is present at residues 145–149 (HQTHH). The Histidine box-3 motif lies at 221 to 225 (HRVHH). 3 helical membrane-spanning segments follow: residues 334 to 354 (LLKIYTVVQFALMLAFYEETF), 363 to 383 (VTLLLRVCFIILTLTSIGFLL), and 413 to 433 (VPSLSSAFEIVFSICIAFWGV).

The protein belongs to the sterol desaturase family. TMEM195 subfamily. The cofactor is Fe cation.

It is found in the endoplasmic reticulum membrane. The enzyme catalyses 1-O-(1,2-saturated-alkyl)-sn-glycerol + (6R)-L-erythro-5,6,7,8-tetrahydrobiopterin + O2 = a 1-(1-hydroxyalkyl)-sn-glycerol + (6R)-L-erythro-6,7-dihydrobiopterin + H2O. Glyceryl-ether monooxygenase that cleaves the O-alkyl bond of ether lipids. Ether lipids are essential components of brain membranes. The chain is Alkylglycerol monooxygenase (AGMO) from Homo sapiens (Human).